Here is a 282-residue protein sequence, read N- to C-terminus: Succinate dehydrogenase [ubiquinone] iron-sulfur subunit, mitochondrial (282 aa).

A mitochondrion-targeting transit peptide spans 1–30 (MAAVVGVSLKRGFSATALGRVGLQFQACRE). An N6-acetyllysine mark is found at Lys53 and Lys57. Positions 56-135 (DKPRMQTYKV…VSKIYPLPHM (80 aa)) constitute a 2Fe-2S ferredoxin-type domain. Residues Cys95, Cys100, Cys103, and Cys115 each coordinate [2Fe-2S] cluster. An interaction with SDHAF1 region spans residues 148-220 (FYAQYKSIEP…PAVLMQAYRW (73 aa)). The 31-residue stretch at 178–208 (DREKLDGLYECILCACCSTSCPSYWWNGDKY) folds into the 4Fe-4S ferredoxin-type domain. The [4Fe-4S] cluster site is built by Cys188, Cys191, and Cys194. Cys198 is a [3Fe-4S] cluster binding site. Trp203 lines the a ubiquinone pocket. [3Fe-4S] cluster is bound by residues Cys245 and Cys251. Cys255 contacts [4Fe-4S] cluster.

Belongs to the succinate dehydrogenase/fumarate reductase iron-sulfur protein family. Component of complex II composed of four subunits: the flavoprotein (FP) SDHA, iron-sulfur protein (IP) SDHB, and a cytochrome b560 composed of SDHC and SDHD. Interacts with SDHAF1; the interaction is required for iron-sulfur cluster incorporation into SDHB. [2Fe-2S] cluster serves as cofactor. The cofactor is [3Fe-4S] cluster. Requires [4Fe-4S] cluster as cofactor.

The protein resides in the mitochondrion inner membrane. It carries out the reaction a quinone + succinate = fumarate + a quinol. The enzyme catalyses (R)-malate + a quinone = enol-oxaloacetate + a quinol. It catalyses the reaction (S)-malate + a quinone = enol-oxaloacetate + a quinol. The protein operates within carbohydrate metabolism; tricarboxylic acid cycle; fumarate from succinate (eukaryal route): step 1/1. With respect to regulation, enol-oxaloacetate inhibits the succinate dehydrogenase activity. Functionally, iron-sulfur protein (IP) subunit of the succinate dehydrogenase complex (mitochondrial respiratory chain complex II), responsible for transferring electrons from succinate to ubiquinone (coenzyme Q). SDH also oxidizes malate to the non-canonical enol form of oxaloacetate, enol-oxaloacetate. Enol-oxaloacetate, which is a potent inhibitor of the succinate dehydrogenase activity, is further isomerized into keto-oxaloacetate. In Rattus norvegicus (Rat), this protein is Succinate dehydrogenase [ubiquinone] iron-sulfur subunit, mitochondrial (Sdhb).